The sequence spans 362 residues: Cobalt-precorrin-5B C(1)-methyltransferase (362 aa).

Belongs to the CbiD family.

It carries out the reaction Co-precorrin-5B + S-adenosyl-L-methionine = Co-precorrin-6A + S-adenosyl-L-homocysteine. Its pathway is cofactor biosynthesis; adenosylcobalamin biosynthesis; cob(II)yrinate a,c-diamide from sirohydrochlorin (anaerobic route): step 6/10. Catalyzes the methylation of C-1 in cobalt-precorrin-5B to form cobalt-precorrin-6A. In Burkholderia orbicola (strain MC0-3), this protein is Cobalt-precorrin-5B C(1)-methyltransferase.